Reading from the N-terminus, the 511-residue chain is Cytochrome P450 76C4 (511 aa).

The chain crosses the membrane as a helical span at residues 3–23; it reads IISGQALFLLFCFISSCFLIS. Cysteine 450 contacts heme.

This sequence belongs to the cytochrome P450 family. The cofactor is heme.

It localises to the membrane. The polypeptide is Cytochrome P450 76C4 (CYP76C4) (Arabidopsis thaliana (Mouse-ear cress)).